The following is a 1527-amino-acid chain: Rho guanine nucleotide exchange factor 11 (1527 aa).

The segment at 1–56 (MSIRLPHSIDRSASKKQSHLSSPIASWLSSLSSLGDSTPERTSPSHHRQPSDTSET) is disordered. Residues serine 2, serine 30, serine 32, and serine 51 each carry the phosphoserine modification. The span at 19-37 (HLSSPIASWLSSLSSLGDS) shows a compositional bias: low complexity. A PDZ domain is found at 64–143 (CVIIQKDQHG…LTLLGSSPPS (80 aa)). The disordered stretch occupies residues 216-247 (PCGETSQRTCEGRLSVDSQEADSGLDSGTERF). Phosphoserine is present on residues serine 262 and serine 268. Threonine 271 carries the phosphothreonine modification. Serine 272 and serine 288 each carry phosphoserine. Residues 323 to 503 (ESDIIFQDLE…NTFMSHAGIR (181 aa)) form the RGSL domain. The stretch at 461-487 (LRERQMAEKQLAALGDILSKYEEDRSA) forms a coiled coil. Disordered stretches follow at residues 506-569 (ESRS…QSIK) and 582-687 (NSHQ…GRRS). Residues 509-519 (SSCTAEKTQSA) show a composition bias toward polar residues. Composition is skewed to basic and acidic residues over residues 539-551 (SKKE…DKKR) and 624-645 (KGRE…RSDV). A phosphoserine mark is found at serine 643 and serine 671. Over residues 656-672 (LHQSASSSASSLSTRSL) the composition is skewed to low complexity. Phosphothreonine occurs at positions 676 and 680. The 190-residue stretch at 742–931 (DRQEVINELF…REILKFVNEA (190 aa)) folds into the DH domain. Positions 973–1087 (KMIHEGPLTW…WMELLEEAVQ (115 aa)) constitute a PH domain. Disordered regions lie at residues 1090–1184 (TKHP…NRGI), 1231–1321 (QAAG…TEPA), and 1379–1411 (AGPL…PQPY). The span at 1126-1138 (EVYHTEKEPKKLP) shows a compositional bias: basic and acidic residues. Polar residues predominate over residues 1242 to 1251 (PTPSVVSITS). Serine 1299 and serine 1304 each carry phosphoserine. The span at 1312 to 1321 (AAEAASTEPA) shows a compositional bias: low complexity. Serine 1462 and serine 1463 each carry phosphoserine. Threonine 1467 and threonine 1480 each carry phosphothreonine. Residues 1480–1527 (TDYSLSPPAKEALASDSQNGQEQGSCPEEGSDIALEDSATDTAVSPGP) form a disordered region. Position 1485 is a phosphoserine (serine 1485). Over residues 1494–1503 (SDSQNGQEQG) the composition is skewed to polar residues. A compositionally biased stretch (acidic residues) spans 1508–1518 (EGSDIALEDSA).

Interacts with RHOA, GNA13 and SLC1A6. Interacts with GNA12, PLXNB1 and PLXNB2. Interacts (via DH domain) with GCSAM (via C-terminus). Found in a complex with ARHGEF11 and ARHGEF12; binding to ARHGEF11 and ARHGEF12 enhances CDC42 GEF activity of PLEKHG4B, and PLEKHG4B, in turn, inhibits ARHGEF11- and ARHGEF12-mediated RHOA activation. Phosphorylated by MAP kinase p38 (MAPK11, MAPK12, MAPK13 and/or MAPK14). In terms of processing, ubiquitinated by the BCR(KLHL20) E3 ubiquitin ligase complex when previously phosphorylated by MAP kinase p38 (MAPK11, MAPK12, MAPK13 and/or MAPK14), leading to its degradation, thereby restricting RhoA activity and facilitating growth cone spreading and neurite outgrowth.

It is found in the cytoplasm. Its subcellular location is the membrane. Functionally, may play a role in the regulation of RhoA GTPase by guanine nucleotide-binding alpha-12 (GNA12) and alpha-13 (GNA13). Acts as guanine nucleotide exchange factor (GEF) for RhoA GTPase and may act as GTPase-activating protein (GAP) for GNA12 and GNA13. Involved in neurotrophin-induced neurite outgrowth. The protein is Rho guanine nucleotide exchange factor 11 (Arhgef11) of Rattus norvegicus (Rat).